A 117-amino-acid polypeptide reads, in one-letter code: Ig heavy chain V region G4 (117 aa).

A signal peptide spans 1 to 19 (MTHWLCFTLALVAVRGVLS). The interval 20-49 (EIQLVESGGAIRKPGDSLRLSCKASGFTFS) is framework-1. Residues Cys41 and Cys115 are joined by a disulfide bond. Residues 50–54 (DTWMA) are complementarity-determining-1. The framework-2 stretch occupies residues 55-68 (WARQPPGKGLQWVG). The tract at residues 69–85 (EINGNSETIRYAPEVKG) is complementarity-determining-2. The segment at 86–117 (RLTISRDNTQNLLFLQISSLKPEDTATYYCAR) is framework-3.

This is Ig heavy chain V region G4 (G4) from Caiman crocodilus (Spectacled caiman).